Here is a 109-residue protein sequence, read N- to C-terminus: ATP-dependent Clp protease adapter protein ClpS (109 aa).

The tract at residues 1-20 (MAERKQGGQGNGVGSSVVTE) is disordered.

The protein belongs to the ClpS family. In terms of assembly, binds to the N-terminal domain of the chaperone ClpA.

Involved in the modulation of the specificity of the ClpAP-mediated ATP-dependent protein degradation. The polypeptide is ATP-dependent Clp protease adapter protein ClpS (Caulobacter vibrioides (strain NA1000 / CB15N) (Caulobacter crescentus)).